The sequence spans 1025 residues: MKFFALFIYRPVATILLSVAITLCGILGFRMLPVAPLPQVDFPVIMVSASLPGASPETMASSVATPLERSLGRIAGVSEMTSSSSLGSTRIILQFDFDRDINGAARDVQAAINAAQSLLPSGMPSRPTYRKANPSDAPIMILTLTSDTYSQGKLYDFASTQLAPTISQIDGVGDVDVGGSSLPAVRVGLNPQALFNQGVSLDDVRTAISNANVRKPQGALEDGTHRWQIQTNDELKTAAEYQPLIIHYNNGGAVRLGDVATVTDSVQDVRNAGMTNAKPAILLMIRKLPEANIIQTVDSIRAKLPELQETIPAAIDLQIAQDRSPTIRASLEEVEQTLIISVALVILVVFLFLRSGRATIIPAVAVPVSLIGTFAAMYLCGFSLNNLSLMALTIATGFVVDDAIVVLENIARHLEAGMKPLQAALQGTREVGFTVLSMSLSLVAVFLPLLLMGGLPGRLLREFAVTLSVAIGISLLVSLTLTPMMCGWMLKASKPREQKRLRGFGRMLVALQQGYGKSLKWVLNHTRLVGVVLLGTIALNIWLYISIPKTFFPEQDTGVLMGGIQADQSISFQAMRGKLQDFMKIIRDDPAVDNVTGFTGGSRVNSGMMFITLKPRDERSETAQQIIDRLRVKLAKEPGANLFLMAVQDIRVGGRQSNASYQYTLLSDDLAALREWEPKIRKKLATLPELADVNSDQQDNGAEMNLVYDRDTMARLGIDVQAANSLLNNAFGQRQISTIYQPMNQYKVVMEVDPRYTQDISALEKMFVINNEGKAIPLSYFAKWQPANAPLSVNHQGLSAASTISFNLPTGKSLSDASAAIDRAMTQLGVPSTVRGSFAGTAQVFQETMNSQVILIIAAIATVYIVLGILYESYVHPLTILSTLPSAGVGALLALELFNAPFSLIALIGIMLLIGIVKKNAIMMVDFALEAQRHGNLTPQEAIFQACLLRFRPIMMTTLAALFGALPLVLSGGDGSELRQPLGITIVGGLVMSQLLTLYTTPVVYLFFDRLRLRFSRKPKQTVTE.

Helical transmembrane passes span 3 to 23 (FFAL…AITL), 333 to 353 (EVEQ…FLFL), 360 to 380 (IIPA…MYLC), 387 to 407 (LSLM…IVVL), 431 to 451 (VGFT…PLLL), 463 to 483 (FAVT…TLTP), 528 to 548 (LVGV…ISIP), 853 to 873 (VILI…LYES), 875 to 895 (VHPL…LLAL), 897 to 917 (LFNA…IGIV), 953 to 973 (PIMM…LSGG), and 984 to 1004 (ITIV…TPVV).

It belongs to the resistance-nodulation-cell division (RND) (TC 2.A.6) family. MdtC subfamily. In terms of assembly, part of a tripartite efflux system composed of MdtA, MdtB and MdtC. MdtC forms a heteromultimer with MdtB.

The protein resides in the cell inner membrane. The polypeptide is Multidrug resistance protein MdtC (Shigella boydii serotype 4 (strain Sb227)).